Here is a 415-residue protein sequence, read N- to C-terminus: Secernin-2 (415 aa).

The active site involves Cys8.

Belongs to the peptidase C69 family. Secernin subfamily.

The chain is Secernin-2 (scrn2) from Danio rerio (Zebrafish).